Consider the following 232-residue polypeptide: Orotate phosphoribosyltransferase (232 aa).

Residues arginine 107, lysine 108, lysine 111, and 133-141 contribute to the 5-phospho-alpha-D-ribose 1-diphosphate site; that span reads EDLTTDGGS. Threonine 137 lines the orotate pocket.

The protein belongs to the purine/pyrimidine phosphoribosyltransferase family. PyrE subfamily. In terms of assembly, homodimer. Mg(2+) serves as cofactor.

The catalysed reaction is orotidine 5'-phosphate + diphosphate = orotate + 5-phospho-alpha-D-ribose 1-diphosphate. It participates in pyrimidine metabolism; UMP biosynthesis via de novo pathway; UMP from orotate: step 1/2. In terms of biological role, catalyzes the transfer of a ribosyl phosphate group from 5-phosphoribose 1-diphosphate to orotate, leading to the formation of orotidine monophosphate (OMP). This chain is Orotate phosphoribosyltransferase, found in Cereibacter sphaeroides (strain ATCC 17025 / ATH 2.4.3) (Rhodobacter sphaeroides).